Consider the following 737-residue polypeptide: Probable serine/threonine-protein kinase DDB_G0269628 (737 aa).

A Protein kinase domain is found at Tyr-8 to Leu-488. Residues Leu-14–Ala-22 and Lys-36 contribute to the ATP site. Disordered stretches follow at residues Asn-155–Ser-251 and Thr-278–Asn-298. Polar residues predominate over residues Thr-156 to Val-167. Residues Asn-168–Pro-229 show a composition bias toward low complexity. The active-site Proton acceptor is Asp-349.

It belongs to the protein kinase superfamily. NEK Ser/Thr protein kinase family. NIMA subfamily.

It catalyses the reaction L-seryl-[protein] + ATP = O-phospho-L-seryl-[protein] + ADP + H(+). It carries out the reaction L-threonyl-[protein] + ATP = O-phospho-L-threonyl-[protein] + ADP + H(+). In Dictyostelium discoideum (Social amoeba), this protein is Probable serine/threonine-protein kinase DDB_G0269628.